The primary structure comprises 319 residues: 4-hydroxy-3-methylbut-2-enyl diphosphate reductase (319 aa).

Cys-18 contacts [4Fe-4S] cluster. (2E)-4-hydroxy-3-methylbut-2-enyl diphosphate contacts are provided by His-47 and His-81. Residues His-47 and His-81 each coordinate dimethylallyl diphosphate. Residues His-47 and His-81 each coordinate isopentenyl diphosphate. Position 103 (Cys-103) interacts with [4Fe-4S] cluster. His-131 is a binding site for (2E)-4-hydroxy-3-methylbut-2-enyl diphosphate. Residue His-131 participates in dimethylallyl diphosphate binding. An isopentenyl diphosphate-binding site is contributed by His-131. Glu-133 functions as the Proton donor in the catalytic mechanism. Thr-172 contributes to the (2E)-4-hydroxy-3-methylbut-2-enyl diphosphate binding site. Cys-202 lines the [4Fe-4S] cluster pocket. (2E)-4-hydroxy-3-methylbut-2-enyl diphosphate contacts are provided by Ser-230, Ser-231, Asn-232, and Ser-275. Dimethylallyl diphosphate contacts are provided by Ser-230, Ser-231, Asn-232, and Ser-275. Positions 230, 231, 232, and 275 each coordinate isopentenyl diphosphate.

The protein belongs to the IspH family. The cofactor is [4Fe-4S] cluster.

It catalyses the reaction isopentenyl diphosphate + 2 oxidized [2Fe-2S]-[ferredoxin] + H2O = (2E)-4-hydroxy-3-methylbut-2-enyl diphosphate + 2 reduced [2Fe-2S]-[ferredoxin] + 2 H(+). It carries out the reaction dimethylallyl diphosphate + 2 oxidized [2Fe-2S]-[ferredoxin] + H2O = (2E)-4-hydroxy-3-methylbut-2-enyl diphosphate + 2 reduced [2Fe-2S]-[ferredoxin] + 2 H(+). The protein operates within isoprenoid biosynthesis; dimethylallyl diphosphate biosynthesis; dimethylallyl diphosphate from (2E)-4-hydroxy-3-methylbutenyl diphosphate: step 1/1. It functions in the pathway isoprenoid biosynthesis; isopentenyl diphosphate biosynthesis via DXP pathway; isopentenyl diphosphate from 1-deoxy-D-xylulose 5-phosphate: step 6/6. Its function is as follows. Catalyzes the conversion of 1-hydroxy-2-methyl-2-(E)-butenyl 4-diphosphate (HMBPP) into a mixture of isopentenyl diphosphate (IPP) and dimethylallyl diphosphate (DMAPP). Acts in the terminal step of the DOXP/MEP pathway for isoprenoid precursor biosynthesis. The polypeptide is 4-hydroxy-3-methylbut-2-enyl diphosphate reductase (Methylocella silvestris (strain DSM 15510 / CIP 108128 / LMG 27833 / NCIMB 13906 / BL2)).